Here is a 75-residue protein sequence, read N- to C-terminus: Putative defensin-like protein 119 (75 aa).

A signal peptide spans 1–25; the sequence is MAKSTIFAIFMIVFVLGMVTKETKG. Disulfide bonds link C29–C73, C39–C58, C44–C67, and C48–C69.

This sequence belongs to the DEFL family.

It localises to the secreted. The chain is Putative defensin-like protein 119 (LCR53) from Arabidopsis thaliana (Mouse-ear cress).